The chain runs to 151 residues: Transcriptional repressor NrdR (151 aa).

Positions 1–21 (MRCPFCGEADTQVKDSRPTED) are disordered. A zinc finger lies at 3–34 (CPFCGEADTQVKDSRPTEDGAAIRRRRFCPQC). The segment covering 11-21 (TQVKDSRPTED) has biased composition (basic and acidic residues). In terms of domain architecture, ATP-cone spans 49-139 (LVVVKADQRR…VYRDFREAKD (91 aa)).

It belongs to the NrdR family. Zn(2+) is required as a cofactor.

Negatively regulates transcription of bacterial ribonucleotide reductase nrd genes and operons by binding to NrdR-boxes. In Acidiphilium cryptum (strain JF-5), this protein is Transcriptional repressor NrdR.